We begin with the raw amino-acid sequence, 24 residues long: MLYWLGILIAYADRRPDKVFTLIR.

The protein is Protein YriA of Escherichia coli (strain K12).